The chain runs to 137 residues: Large ribosomal subunit protein uL16 (137 aa).

The protein belongs to the universal ribosomal protein uL16 family. In terms of assembly, part of the 50S ribosomal subunit.

In terms of biological role, binds 23S rRNA and is also seen to make contacts with the A and possibly P site tRNAs. The chain is Large ribosomal subunit protein uL16 from Pseudomonas syringae pv. tomato (strain ATCC BAA-871 / DC3000).